Consider the following 197-residue polypeptide: NADH-quinone oxidoreductase subunit C (197 aa).

Belongs to the complex I 30 kDa subunit family. NDH-1 is composed of 14 different subunits. Subunits NuoB, C, D, E, F, and G constitute the peripheral sector of the complex.

Its subcellular location is the cell inner membrane. The enzyme catalyses a quinone + NADH + 5 H(+)(in) = a quinol + NAD(+) + 4 H(+)(out). NDH-1 shuttles electrons from NADH, via FMN and iron-sulfur (Fe-S) centers, to quinones in the respiratory chain. The immediate electron acceptor for the enzyme in this species is believed to be ubiquinone. Couples the redox reaction to proton translocation (for every two electrons transferred, four hydrogen ions are translocated across the cytoplasmic membrane), and thus conserves the redox energy in a proton gradient. This Methylobacillus flagellatus (strain ATCC 51484 / DSM 6875 / VKM B-1610 / KT) protein is NADH-quinone oxidoreductase subunit C.